Reading from the N-terminus, the 383-residue chain is Gamma-butyrobetaine dioxygenase (383 aa).

Cysteine 46, cysteine 48, cysteine 51, and histidine 91 together coordinate Zn(2+). The Fe cation site is built by histidine 209, aspartate 211, and histidine 350.

It belongs to the gamma-BBH/TMLD family. In terms of assembly, homodimer. Fe(2+) is required as a cofactor. It depends on L-ascorbate as a cofactor.

It localises to the cytoplasm. The catalysed reaction is 4-(trimethylamino)butanoate + 2-oxoglutarate + O2 = carnitine + succinate + CO2. Its pathway is amine and polyamine biosynthesis; carnitine biosynthesis. Catalyzes the formation of L-carnitine from gamma-butyrobetaine. The polypeptide is Gamma-butyrobetaine dioxygenase (Pseudomonas sp. (strain AK-1)).